The primary structure comprises 404 residues: MPTDEPSKRKSILPTIPTSLMLKKSNEALSDFERTFNDRVMDIFAENRRIDVEEFKKNAECFLNIIRSNKIDLNWGEGGESRYVTITRLMKILKTSPQSIKDLLPHNTVSNFVKITNYNLTIDITLLEELVRTVIHAEESYIKLLPFSENSTEISSYSLQDFVATHFIPIMIEEPENPVYYTAYAVGTIFFLLGARRRDCVYLKDLLASTLLLQLEECIHAENHCLSPPKIDVFTVAQFRTTLSEFRFLDSQRKGLLAPADLKFFRDGIFNEVFTKRIFEISITYEDGRIDFKAFVDFVTALKFRHTTASAKYHFEILDLKDDGLLDEEEIRSISSFQLQNLPDYVPEDNSVNPEVATAELRDMMRLNQNGITLEEFLANRMNSTFAGFLSNSDDYMKYERREQ.

In terms of assembly, part of a complex consisting of a common heterodimeric core enzyme, composed of catalytic subunit let-92 and constant regulatory subunit paa-1, that associates with a variety of regulatory subunits which confer distinct properties to the holoenzyme. Interacts with rsa-2, spd-5 and tpxl-1.

The protein localises to the cytoplasm. Its subcellular location is the cytoskeleton. It is found in the microtubule organizing center. The protein resides in the centrosome. In terms of biological role, regulatory subunit of phosphatase let-92 which recruits let-92/paa-1 complex to the centrosomes, thereby regulating microtubule outgrowth from centrosomes and mitotic spindle assembly ensuring the stability of kinetochore microtubules. In Caenorhabditis elegans, this protein is Serine/threonine-protein phosphatase 2A regulatory subunit rsa-1.